Consider the following 252-residue polypeptide: MTSHAPDPIHQFEISRLINVSIGNVDFSFTNVSFFIIATVVLSSVFLFISSSSRRLVPTRMQSISEMAYEFVASTLRESAGVQGMKFFPLVFSLFVFILVANFIGLFPYFYTITSQIMITFSLAMLVILTVIGCGFYKHGIGFLKLFVPSGVPVMILPLVTVIEVISFFSRPISLSLRLFANMLAGHITLKVFSGFIVSMVGLGFIGVGGSILPLIMTVAITALEFLVAFLQAYVFTVLTCMYLNDAVHPGH.

Transmembrane regions (helical) follow at residues 29–49 (FTNV…FLFI), 87–107 (FFPL…IGLF), 117–137 (IMIT…CGFY), 146–166 (LFVP…IEVI), 196–216 (FIVS…LPLI), and 219–239 (VAIT…FTVL).

The protein belongs to the ATPase A chain family. F-type ATPases have 2 components, CF(1) - the catalytic core - and CF(0) - the membrane proton channel. CF(1) has five subunits: alpha(3), beta(3), gamma(1), delta(1), epsilon(1). CF(0) has three main subunits: a(1), b(2) and c(9-12). The alpha and beta chains form an alternating ring which encloses part of the gamma chain. CF(1) is attached to CF(0) by a central stalk formed by the gamma and epsilon chains, while a peripheral stalk is formed by the delta and b chains.

Its subcellular location is the cell inner membrane. Functionally, key component of the proton channel; it plays a direct role in the translocation of protons across the membrane. The protein is ATP synthase subunit a of Bartonella bacilliformis (strain ATCC 35685 / KC583 / Herrer 020/F12,63).